We begin with the raw amino-acid sequence, 336 residues long: ATP-dependent 6-phosphofructokinase (336 aa).

Gly11 provides a ligand contact to ATP. 21-25 contacts ADP; the sequence is RAVVR. ATP contacts are provided by residues 72–73 and 102–105; these read RY and GDGS. Asp103 contributes to the Mg(2+) binding site. Residue 125–127 coordinates substrate; that stretch reads TID. The active-site Proton acceptor is the Asp127. ADP is bound at residue Arg154. Residues Arg162 and 169–171 each bind substrate; that span reads MGR. Residues 185–187, Lys211, and 213–215 contribute to the ADP site; these read GAD and KKH. Residues Glu222, Arg244, and 250–253 contribute to the substrate site; that span reads HIQR.

This sequence belongs to the phosphofructokinase type A (PFKA) family. ATP-dependent PFK group I subfamily. Prokaryotic clade 'B1' sub-subfamily. As to quaternary structure, homotetramer. Mg(2+) serves as cofactor.

The protein resides in the cytoplasm. It catalyses the reaction beta-D-fructose 6-phosphate + ATP = beta-D-fructose 1,6-bisphosphate + ADP + H(+). The protein operates within carbohydrate degradation; glycolysis; D-glyceraldehyde 3-phosphate and glycerone phosphate from D-glucose: step 3/4. Allosterically activated by ADP and other diphosphonucleosides, and allosterically inhibited by phosphoenolpyruvate. Catalyzes the phosphorylation of D-fructose 6-phosphate to fructose 1,6-bisphosphate by ATP, the first committing step of glycolysis. This Streptococcus suis (strain 05ZYH33) protein is ATP-dependent 6-phosphofructokinase.